The sequence spans 763 residues: Phosphoglycerol transferase I (763 aa).

A run of 4 helical transmembrane segments spans residues 1 to 21 (MSEL…AWKA), 26 to 46 (WWFA…ITLY), 77 to 97 (ILPG…LGWV), and 108 to 128 (VGYS…SPAF).

This sequence belongs to the OpgB family.

Its subcellular location is the cell inner membrane. The catalysed reaction is a phosphatidylglycerol + a membrane-derived-oligosaccharide D-glucose = a 1,2-diacyl-sn-glycerol + a membrane-derived-oligosaccharide 6-(glycerophospho)-D-glucose.. It functions in the pathway glycan metabolism; osmoregulated periplasmic glucan (OPG) biosynthesis. Functionally, transfers a phosphoglycerol residue from phosphatidylglycerol to the membrane-bound nascent glucan backbones. The chain is Phosphoglycerol transferase I from Salmonella schwarzengrund (strain CVM19633).